A 207-amino-acid chain; its full sequence is MSPDQLVVEFDRALRTILAPARSMRPLPGAALPDAELPAAQRSHVAGLMRVNHCGEICAQALYQGQALTSRDPTIRDALRSAADEETEHLAWTERRISELGGRKSFLNPLWYLGSLSLGLVAGALGDKWSLGFLAETERQVEAHLNGHLRSLPEDDSRSRAIVDQMRLDEIQHAETAVRYGAAELPSPAKVAMKVMAKVMTGVAYRF.

Fe cation is bound by residues glutamate 56, glutamate 86, histidine 89, glutamate 138, glutamate 170, and histidine 173.

This sequence belongs to the COQ7 family. Fe cation is required as a cofactor.

Its subcellular location is the cell membrane. It carries out the reaction a 5-methoxy-2-methyl-3-(all-trans-polyprenyl)benzene-1,4-diol + AH2 + O2 = a 3-demethylubiquinol + A + H2O. Its pathway is cofactor biosynthesis; ubiquinone biosynthesis. In terms of biological role, catalyzes the hydroxylation of 2-nonaprenyl-3-methyl-6-methoxy-1,4-benzoquinol during ubiquinone biosynthesis. The polypeptide is 3-demethoxyubiquinol 3-hydroxylase (Dechloromonas aromatica (strain RCB)).